The following is a 511-amino-acid chain: Bifunctional purine biosynthesis protein PurH (511 aa).

One can recognise an MGS-like domain in the interval 1–147 (MIQIKRALIS…KNYKHTLVLT (147 aa)).

It belongs to the PurH family.

It catalyses the reaction (6R)-10-formyltetrahydrofolate + 5-amino-1-(5-phospho-beta-D-ribosyl)imidazole-4-carboxamide = 5-formamido-1-(5-phospho-D-ribosyl)imidazole-4-carboxamide + (6S)-5,6,7,8-tetrahydrofolate. It carries out the reaction IMP + H2O = 5-formamido-1-(5-phospho-D-ribosyl)imidazole-4-carboxamide. It functions in the pathway purine metabolism; IMP biosynthesis via de novo pathway; 5-formamido-1-(5-phospho-D-ribosyl)imidazole-4-carboxamide from 5-amino-1-(5-phospho-D-ribosyl)imidazole-4-carboxamide (10-formyl THF route): step 1/1. It participates in purine metabolism; IMP biosynthesis via de novo pathway; IMP from 5-formamido-1-(5-phospho-D-ribosyl)imidazole-4-carboxamide: step 1/1. The sequence is that of Bifunctional purine biosynthesis protein PurH from Leptospira interrogans serogroup Icterohaemorrhagiae serovar Lai (strain 56601).